A 98-amino-acid polypeptide reads, in one-letter code: Pancreatic polypeptide prohormone (98 aa).

The N-terminal stretch at methionine 1–glycine 29 is a signal peptide. At tyrosine 65 the chain carries Tyrosine amide.

Belongs to the NPY family. Post-translationally, no icosapeptide-like peptide is cleaved from the C-terminal.

The protein resides in the secreted. In terms of biological role, hormone secreted by pancreatic cells that acts as a regulator of pancreatic and gastrointestinal functions probably by signaling through the G protein-coupled receptor NPY4R2. This chain is Pancreatic polypeptide prohormone (Ppy), found in Rattus norvegicus (Rat).